The chain runs to 450 residues: Phosphoglucosamine mutase 2 (450 aa).

The active-site Phosphoserine intermediate is serine 101. Residues serine 101, aspartate 245, aspartate 247, and aspartate 249 each coordinate Mg(2+). The residue at position 101 (serine 101) is a Phosphoserine.

Belongs to the phosphohexose mutase family. Mg(2+) serves as cofactor. Post-translationally, activated by phosphorylation.

It catalyses the reaction alpha-D-glucosamine 1-phosphate = D-glucosamine 6-phosphate. Its function is as follows. Catalyzes the conversion of glucosamine-6-phosphate to glucosamine-1-phosphate. The protein is Phosphoglucosamine mutase 2 of Shewanella baltica (strain OS185).